A 300-amino-acid polypeptide reads, in one-letter code: TLR adapter interacting with SLC15A4 on the lysosome (300 aa).

The pLxIS motif signature appears at 289 to 293 (SLHIS). Position 293 is a phosphoserine (S293).

As to quaternary structure, interacts (via pLxIS motif) with IRF5; leading to IRF5 activation. Interacts with SLC15A4; leading to its recruitment to endolysosome. The phosphorylated pLxIS motif constitutes an IRF5-binding motif, leading to recruitment of the transcription factor IRF5 to induce type-I interferons and other cytokines.

The protein resides in the lysosome membrane. It is found in the endosome membrane. Its subcellular location is the nucleus. The protein localises to the cytoplasm. Innate immune adapter that mediates the recruitment and activation of IRF5 downstream of endolysosomal toll-like receptors TLR7, TLR8 and TLR9. Following recruitment to endolysosome by SLC15A4 downstream of TLR7, TLR8 and TLR9, specifically recruits IRF5 transcription factor via its pLxIS motif, leading to IRF5 activation and subsequent expression of type I interferons. Plays a role in the regulation of endolysosomal pH in immune cells such as B-cells, dendritic cells and monocytes. In Bos taurus (Bovine), this protein is TLR adapter interacting with SLC15A4 on the lysosome.